The primary structure comprises 306 residues: Dermonecrotic toxin LarSicTox-alphaIB1ai (306 aa).

Valine 1 is a signal peptide. Residues 2 to 27 (RATEKFASMYFFCHSPQSAETDVAER) constitute a propeptide that is removed on maturation. Residue histidine 38 is part of the active site. Positions 58 and 60 each coordinate Mg(2+). Catalysis depends on histidine 74, which acts as the Nucleophile. 2 cysteine pairs are disulfide-bonded: cysteine 78-cysteine 84 and cysteine 80-cysteine 223. Aspartate 118 contacts Mg(2+). N-linked (GlcNAc...) asparagine glycosylation occurs at asparagine 283.

It belongs to the arthropod phospholipase D family. Class II subfamily. Requires Mg(2+) as cofactor. As to expression, expressed by the venom gland.

The protein localises to the secreted. It carries out the reaction an N-(acyl)-sphingosylphosphocholine = an N-(acyl)-sphingosyl-1,3-cyclic phosphate + choline. It catalyses the reaction an N-(acyl)-sphingosylphosphoethanolamine = an N-(acyl)-sphingosyl-1,3-cyclic phosphate + ethanolamine. The catalysed reaction is a 1-acyl-sn-glycero-3-phosphocholine = a 1-acyl-sn-glycero-2,3-cyclic phosphate + choline. The enzyme catalyses a 1-acyl-sn-glycero-3-phosphoethanolamine = a 1-acyl-sn-glycero-2,3-cyclic phosphate + ethanolamine. Functionally, dermonecrotic toxins cleave the phosphodiester linkage between the phosphate and headgroup of certain phospholipids (sphingolipid and lysolipid substrates), forming an alcohol (often choline) and a cyclic phosphate. This toxin acts on sphingomyelin (SM). It may also act on ceramide phosphoethanolamine (CPE), lysophosphatidylcholine (LPC) and lysophosphatidylethanolamine (LPE), but not on lysophosphatidylserine (LPS), and lysophosphatidylglycerol (LPG). It acts by transphosphatidylation, releasing exclusively cyclic phosphate products as second products. Induces dermonecrosis, hemolysis, increased vascular permeability, edema, inflammatory response, and platelet aggregation. The chain is Dermonecrotic toxin LarSicTox-alphaIB1ai from Loxosceles arizonica (Arizona brown spider).